Here is a 288-residue protein sequence, read N- to C-terminus: Ribosomal RNA small subunit methyltransferase A (288 aa).

Residues N37, L39, G64, E86, D112, and N131 each contribute to the S-adenosyl-L-methionine site.

It belongs to the class I-like SAM-binding methyltransferase superfamily. rRNA adenine N(6)-methyltransferase family. RsmA subfamily.

Its subcellular location is the cytoplasm. It carries out the reaction adenosine(1518)/adenosine(1519) in 16S rRNA + 4 S-adenosyl-L-methionine = N(6)-dimethyladenosine(1518)/N(6)-dimethyladenosine(1519) in 16S rRNA + 4 S-adenosyl-L-homocysteine + 4 H(+). Functionally, specifically dimethylates two adjacent adenosines (A1518 and A1519) in the loop of a conserved hairpin near the 3'-end of 16S rRNA in the 30S particle. May play a critical role in biogenesis of 30S subunits. In Rhodospirillum rubrum (strain ATCC 11170 / ATH 1.1.1 / DSM 467 / LMG 4362 / NCIMB 8255 / S1), this protein is Ribosomal RNA small subunit methyltransferase A.